A 1214-amino-acid polypeptide reads, in one-letter code: Lysine-specific demethylase 3A (1214 aa).

Ser-150 and Ser-209 each carry phosphoserine. The span at 194 to 211 (TPSSNRQQNTPQAANSPP) shows a compositional bias: polar residues. Disordered regions lie at residues 194 to 215 (TPSS…NIGA), 271 to 293 (PKGS…STPQ), and 310 to 398 (KAEL…KSVL). Position 330 is a phosphoserine (Ser-330). Over residues 361-370 (LGSQSQNLKE) the composition is skewed to polar residues. Basic and acidic residues predominate over residues 371–380 (TSVKVDHDSC). Residues 381-391 (CTRSSNKTQTP) are compositionally biased toward polar residues. The segment at 546–571 (CDVCDTTIFNLHWVCPRCGFGVCVDC) adopts a C6-type zinc-finger fold. Positions 769-773 (LRNLL) match the LXXLL motif motif. The residue at position 779 (Lys-779) is an N6-acetyllysine. One can recognise a JmjC domain in the interval 944-1167 (MPSRFDDLMA…HCFWLTQEFR (224 aa)). Fe cation-binding residues include His-1006, Asp-1008, and His-1135.

This sequence belongs to the JHDM2 histone demethylase family. As to quaternary structure, interacts with VRK1. It depends on Fe(2+) as a cofactor. In terms of tissue distribution, testis specific. Expressed only in male germ cells.

The protein resides in the cytoplasm. It localises to the nucleus. The enzyme catalyses N(6),N(6)-dimethyl-L-lysyl(9)-[histone H3] + 2 2-oxoglutarate + 2 O2 = L-lysyl(9)-[histone H3] + 2 formaldehyde + 2 succinate + 2 CO2. Functionally, histone demethylase that specifically demethylates 'Lys-9' of histone H3, thereby playing a central role in histone code. Preferentially demethylates mono- and dimethylated H3 'Lys-9' residue, with a preference for dimethylated residue, while it has weak or no activity on trimethylated H3 'Lys-9'. Demethylation of Lys residue generates formaldehyde and succinate. Involved in hormone-dependent transcriptional activation, by participating in recruitment to androgen-receptor target genes, resulting in H3 'Lys-9' demethylation and transcriptional activation. Involved in spermatogenesis by regulating expression of target genes such as PRM1 and TNP1 which are required for packaging and condensation of sperm chromatin. Directly regulates expression of PPARA and UCP1 and is involved in obesity resistance. The chain is Lysine-specific demethylase 3A (Kdm3a) from Rattus norvegicus (Rat).